The sequence spans 171 residues: Large ribosomal subunit protein bL9 (171 aa).

This sequence belongs to the bacterial ribosomal protein bL9 family.

Functionally, binds to the 23S rRNA. This Rickettsia africae (strain ESF-5) protein is Large ribosomal subunit protein bL9.